We begin with the raw amino-acid sequence, 390 residues long: Pre-mycofactocin synthase (390 aa).

One can recognise an FMN hydroxy acid dehydrogenase domain in the interval 1 to 383 (MADEWFETVA…RSDDILIPAD (383 aa)). The FMN site is built by Ser-108, Gln-128, Thr-156, and Lys-254. His-278 acts as the Proton acceptor in catalysis. Residues 309–313 (DGGIR) and 332–333 (GR) contribute to the FMN site.

It belongs to the FMN-dependent alpha-hydroxy acid dehydrogenase family. It depends on FMN as a cofactor.

It carries out the reaction 3-amino-5-[(4-hydroxyphenyl)methyl]-4,4-dimethyl-2-pyrrolidin-2-one + O2 + H2O = pre-mycofactocin + H2O2 + NH4(+). In terms of biological role, involved in the biosynthesis of the enzyme cofactor mycofactocin (MFT). Catalyzes the oxidative deamination of AHDP (3-amino-5-[(4-hydroxyphenyl)methyl]-4,4-dimethyl-2-pyrrolidin-2-one), forming an alpha-keto amide moiety on the resulting molecule, which is called pre-mycofactocin (PMFT). This reaction occurs via a 5-[(4-hydroxyphenyl)methyl]-3-imino-4,4-dimethylpyrrolidin-2-one intermediate, which converts to PMFT. The alpha-keto amide moiety is the redox-active center for the redox activity of mycofactocin. The chain is Pre-mycofactocin synthase from Mycobacterium ulcerans (strain Agy99).